The chain runs to 184 residues: ATP-dependent protease subunit HslV (184 aa).

Thr12 is a catalytic residue. Na(+) contacts are provided by Ala166, Cys169, and Thr172.

Belongs to the peptidase T1B family. HslV subfamily. As to quaternary structure, a double ring-shaped homohexamer of HslV is capped on each side by a ring-shaped HslU homohexamer. The assembly of the HslU/HslV complex is dependent on binding of ATP.

Its subcellular location is the cytoplasm. The enzyme catalyses ATP-dependent cleavage of peptide bonds with broad specificity.. With respect to regulation, allosterically activated by HslU binding. Its function is as follows. Protease subunit of a proteasome-like degradation complex believed to be a general protein degrading machinery. The sequence is that of ATP-dependent protease subunit HslV from Nitrobacter hamburgensis (strain DSM 10229 / NCIMB 13809 / X14).